A 217-amino-acid chain; its full sequence is Yop proteins translocation protein R (217 aa).

Transmembrane regions (helical) follow at residues 11–31 (IIVL…TSFV), 53–73 (MAMY…VGFA), 157–177 (IGFL…NILL), and 181–201 (MMMV…FVLL).

It belongs to the FliP/MopC/SpaP family.

The protein localises to the cell membrane. Component of the yop secretion machinery. May have a role in the negative pathway regulation of yop expression controlled by calcium. This is Yop proteins translocation protein R (yscR) from Yersinia pestis.